The primary structure comprises 181 residues: Monofunctional chorismate mutase (181 aa).

A signal peptide spans 1 to 20 (MIRHIAIFLCSLLMCSTTFA). Residues 21-102 (DSVTSVSLGA…ASKAIQYRYL (82 aa)) form the Chorismate mutase domain. Substrate contacts are provided by R38, K49, D58, E62, and Q98.

The protein resides in the periplasm. The enzyme catalyses chorismate = prephenate. Its pathway is metabolic intermediate biosynthesis; prephenate biosynthesis; prephenate from chorismate: step 1/1. Its function is as follows. Catalyzes the Claisen rearrangement of chorismate to prephenate. The protein is Monofunctional chorismate mutase of Salmonella typhimurium.